The sequence spans 82 residues: uncharacterized protein (82 aa).

It is found in the plastid. Its subcellular location is the chloroplast. This is an uncharacterized protein from Vicia faba (Broad bean).